The primary structure comprises 311 residues: Mediator of RNA polymerase II transcription subunit 27 (311 aa).

S132 carries the post-translational modification Phosphoserine. K134 carries the N6-methyllysine modification.

Belongs to the Mediator complex subunit 27 family. In terms of assembly, component of the Mediator complex, which is composed of MED1, MED4, MED6, MED7, MED8, MED9, MED10, MED11, MED12, MED13, MED13L, MED14, MED15, MED16, MED17, MED18, MED19, MED20, MED21, MED22, MED23, MED24, MED25, MED26, MED27, MED29, MED30, MED31, CCNC, CDK8 and CDC2L6/CDK11. The MED12, MED13, CCNC and CDK8 subunits form a distinct module termed the CDK8 module. Mediator containing the CDK8 module is less active than Mediator lacking this module in supporting transcriptional activation. Individual preparations of the Mediator complex lacking one or more distinct subunits have been variously termed ARC, CRSP, DRIP, PC2, SMCC and TRAP.

It is found in the nucleus. Functionally, component of the Mediator complex, a coactivator involved in the regulated transcription of nearly all RNA polymerase II-dependent genes. Mediator functions as a bridge to convey information from gene-specific regulatory proteins to the basal RNA polymerase II transcription machinery. Mediator is recruited to promoters by direct interactions with regulatory proteins and serves as a scaffold for the assembly of a functional preinitiation complex with RNA polymerase II and the general transcription factors. The protein is Mediator of RNA polymerase II transcription subunit 27 (MED27) of Sus scrofa (Pig).